A 392-amino-acid polypeptide reads, in one-letter code: GTPase Obg (392 aa).

The Obg domain maps to 1–159 (MKFVDEATIL…RDLQLELMLL (159 aa)). A disordered region spans residues 127–146 (NTRFKSSVNRTPRQKTMGTP). Polar residues predominate over residues 129-143 (RFKSSVNRTPRQKTM). One can recognise an OBG-type G domain in the interval 160-333 (ADVGMLGLPN…LCWDVMAFIK (174 aa)). GTP is bound by residues 166–173 (GLPNAGKS), 191–195 (FTTLV), 213–216 (DIPG), 283–286 (NKVD), and 314–316 (SAA). Residues S173 and T193 each contribute to the Mg(2+) site. The interval 360 to 392 (QLEEAQPEVEEDDDWDDDWDEDDEEGVETIYQR) is disordered. Over residues 364–386 (AQPEVEEDDDWDDDWDEDDEEGV) the composition is skewed to acidic residues.

The protein belongs to the TRAFAC class OBG-HflX-like GTPase superfamily. OBG GTPase family. In terms of assembly, monomer. Mg(2+) is required as a cofactor.

It localises to the cytoplasm. Functionally, an essential GTPase which binds GTP, GDP and possibly (p)ppGpp with moderate affinity, with high nucleotide exchange rates and a fairly low GTP hydrolysis rate. Plays a role in control of the cell cycle, stress response, ribosome biogenesis and in those bacteria that undergo differentiation, in morphogenesis control. The chain is GTPase Obg from Erwinia tasmaniensis (strain DSM 17950 / CFBP 7177 / CIP 109463 / NCPPB 4357 / Et1/99).